A 506-amino-acid chain; its full sequence is Apolipoprotein N-acyltransferase (506 aa).

Helical transmembrane passes span 10–30 (ANAK…AGWG), 33–53 (LALP…PLWW), 57–77 (VLAP…FYGS), 105–125 (IWLC…LLMA), 139–159 (WGVT…LWWI), 176–196 (LAGP…VTLS), and 205–225 (VGLA…SVRV). Residues 238 to 473 (IQGNIPTREK…FVIYAATIFR (236 aa)) enclose the CN hydrolase domain. Glu279 serves as the catalytic Proton acceptor. Residue Lys336 is part of the active site. Catalysis depends on Cys385, which acts as the Nucleophile. A helical membrane pass occupies residues 483 to 500 (YGDWLLPLLLGMLSLSVL).

It belongs to the CN hydrolase family. Apolipoprotein N-acyltransferase subfamily.

Its subcellular location is the cell inner membrane. It catalyses the reaction N-terminal S-1,2-diacyl-sn-glyceryl-L-cysteinyl-[lipoprotein] + a glycerophospholipid = N-acyl-S-1,2-diacyl-sn-glyceryl-L-cysteinyl-[lipoprotein] + a 2-acyl-sn-glycero-3-phospholipid + H(+). Its pathway is protein modification; lipoprotein biosynthesis (N-acyl transfer). Catalyzes the phospholipid dependent N-acylation of the N-terminal cysteine of apolipoprotein, the last step in lipoprotein maturation. The sequence is that of Apolipoprotein N-acyltransferase from Thermosynechococcus vestitus (strain NIES-2133 / IAM M-273 / BP-1).